A 311-amino-acid polypeptide reads, in one-letter code: HPr kinase/phosphorylase (311 aa).

Active-site residues include histidine 139 and lysine 160. 154–161 is an ATP binding site; it reads GDSGVGKS. Serine 161 serves as a coordination point for Mg(2+). The Proton acceptor; for phosphorylation activity. Proton donor; for dephosphorylation activity role is filled by aspartate 178. The interval 202–211 is important for the catalytic mechanism of both phosphorylation and dephosphorylation; it reads LEIRGIGIID. A Mg(2+)-binding site is contributed by glutamate 203. Arginine 244 is a catalytic residue. The tract at residues 265–270 is important for the catalytic mechanism of dephosphorylation; that stretch reads PVKTGR.

It belongs to the HPrK/P family. Homohexamer. Requires Mg(2+) as cofactor.

It carries out the reaction [HPr protein]-L-serine + ATP = [HPr protein]-O-phospho-L-serine + ADP + H(+). The catalysed reaction is [HPr protein]-O-phospho-L-serine + phosphate + H(+) = [HPr protein]-L-serine + diphosphate. In terms of biological role, catalyzes the ATP- as well as the pyrophosphate-dependent phosphorylation of a specific serine residue in HPr, a phosphocarrier protein of the phosphoenolpyruvate-dependent sugar phosphotransferase system (PTS). HprK/P also catalyzes the pyrophosphate-producing, inorganic phosphate-dependent dephosphorylation (phosphorolysis) of seryl-phosphorylated HPr (P-Ser-HPr). The two antagonistic activities of HprK/P are regulated by several intracellular metabolites, which change their concentration in response to the absence or presence of rapidly metabolisable carbon sources (glucose, fructose, etc.) in the growth medium. Therefore, by controlling the phosphorylation state of HPr, HPrK/P is a sensor enzyme that plays a major role in the regulation of carbon metabolism and sugar transport: it mediates carbon catabolite repression (CCR), and regulates PTS-catalyzed carbohydrate uptake and inducer exclusion. The chain is HPr kinase/phosphorylase from Levilactobacillus brevis (strain ATCC 367 / BCRC 12310 / CIP 105137 / JCM 1170 / LMG 11437 / NCIMB 947 / NCTC 947) (Lactobacillus brevis).